The chain runs to 448 residues: Ribosomal protein uS12 methylthiotransferase RimO (448 aa).

The region spanning 7 to 123 is the MTTase N-terminal domain; sequence EKVSLVSLGC…IAEIIAEKKQ (117 aa). The [4Fe-4S] cluster site is built by Cys16, Cys52, Cys86, Cys161, Cys165, and Cys168. A Radical SAM core domain is found at 147–377; the sequence is SSPHYTAYLK…MRTQARVSFK (231 aa). The region spanning 380–448 is the TRAM domain; sequence RTLVDSEEDV…DYDLIGEIVD (69 aa).

It belongs to the methylthiotransferase family. RimO subfamily. The cofactor is [4Fe-4S] cluster.

It localises to the cytoplasm. The catalysed reaction is L-aspartate(89)-[ribosomal protein uS12]-hydrogen + (sulfur carrier)-SH + AH2 + 2 S-adenosyl-L-methionine = 3-methylsulfanyl-L-aspartate(89)-[ribosomal protein uS12]-hydrogen + (sulfur carrier)-H + 5'-deoxyadenosine + L-methionine + A + S-adenosyl-L-homocysteine + 2 H(+). In terms of biological role, catalyzes the methylthiolation of an aspartic acid residue of ribosomal protein uS12. The chain is Ribosomal protein uS12 methylthiotransferase RimO from Citrifermentans bemidjiense (strain ATCC BAA-1014 / DSM 16622 / JCM 12645 / Bem) (Geobacter bemidjiensis).